Reading from the N-terminus, the 24-residue chain is Coenzyme PQQ synthesis protein A (24 aa).

The pyrroloquinoline quinone (Glu-Tyr) cross-link spans 16–20; sequence EVTMY.

This sequence belongs to the PqqA family.

It participates in cofactor biosynthesis; pyrroloquinoline quinone biosynthesis. Its function is as follows. Required for coenzyme pyrroloquinoline quinone (PQQ) biosynthesis. PQQ is probably formed by cross-linking a specific glutamate to a specific tyrosine residue and excising these residues from the peptide. This is Coenzyme PQQ synthesis protein A from Pseudomonas fluorescens (strain Pf0-1).